The following is a 1092-amino-acid chain: Extended synaptotagmin-1 (1092 aa).

M1 carries the N-acetylmethionine modification. Residues 1–28 (MEHSPEEGASPEPSGQPPATDSTRDGGS) lie on the Cytoplasmic side of the membrane. The disordered stretch occupies residues 1 to 36 (MEHSPEEGASPEPSGQPPATDSTRDGGSGVPPAGPG). A helical transmembrane segment spans residues 29-49 (GVPPAGPGAASEALAVLTSFG). At 50–52 (RRL) the chain is on the lumenal side. A helical membrane pass occupies residues 53-73 (LVLVPVYLAGAAGLSVGFVLF). The Cytoplasmic segment spans residues 74–1092 (GLALYLGWRR…LMDDRDKGGS (1019 aa)). Positions 125 to 303 (DVEKAEWLNK…LPNRLLVPLV (179 aa)) constitute an SMP-LTD domain. C2 domains are found at residues 302–423 (LVPD…DNWY), 444–570 (DAEK…QLSS), 616–738 (DAPP…DEWL), and 769–886 (QVNS…ALSG). S314 is subject to Phosphoserine; by CDK5. 8 residues coordinate Ca(2+): K334, D335, D347, D394, D396, D398, D400, and D401. Residues 604–628 (WDRESLETGSSVDAPPRPYHTTPNS) are disordered. An N6-acetyllysine modification is found at K804. Phosphoserine is present on S807. The disordered stretch occupies residues 909-937 (HSHSYSHSHSSSSLNDEPEALGGPTHPAS). A compositionally biased stretch (low complexity) spans 911 to 921 (HSYSHSHSSSS). A phosphoserine mark is found at S937 and S951. The C2 5 domain maps to 959 to 1081 (PLGQVKLTVW…DLSQGAAQWY (123 aa)). Phosphotyrosine is present on Y997. The tract at residues 1006–1013 (KNRSTKRK) is required for phosphatidylinositol 4,5-bisphosphate-dependent location at the cell membrane.

It belongs to the extended synaptotagmin family. In terms of assembly, interacts with ESYT2 and ESYT3. Interacts with ADGRD1; inhibiting the G-protein-coupled receptor activity of ADGRD1. Interaction with ADGRD1 is abolished when cytosolic calcium increases, relieving ADGRD1 G-protein-coupled receptor activity. Interacts (phosphorylated form) with SLC2A4. Phosphorylated on Ser residues in insulin-treated adipocytes (in vitro); this promotes interaction with SLC2A4.

The protein localises to the endoplasmic reticulum membrane. It localises to the cell membrane. Functionally, binds calcium (via the C2 domains) and translocates to sites of contact between the endoplasmic reticulum and the cell membrane in response to increased cytosolic calcium levels. Helps tether the endoplasmic reticulum to the cell membrane and promotes the formation of appositions between the endoplasmic reticulum and the cell membrane. Acts as an inhibitor of ADGRD1 G-protein-coupled receptor activity in absence of cytosolic calcium. Binds glycerophospholipids in a barrel-like domain and may play a role in cellular lipid transport. This Mus musculus (Mouse) protein is Extended synaptotagmin-1 (Esyt1).